Here is a 598-residue protein sequence, read N- to C-terminus: Centrosomal protein of 70 kDa (598 aa).

The segment covering 16 to 38 (DSTKEPLSTVTSQAQDSSLSANR) has biased composition (polar residues). Residues 16-43 (DSTKEPLSTVTSQAQDSSLSANRPVTEK) form a disordered region. Coiled coils occupy residues 99–210 (TRQQ…EEDR) and 255–317 (TYKG…NIKL). The TPR repeat unit spans residues 484–517 (NGVYPRMNEVYARLGEMNNAVRNLQELLGLDSSS).

In terms of assembly, directly interacts with tubulin-gamma; this interaction determines centrosomal localization.

Its subcellular location is the cytoplasm. It localises to the cytoskeleton. The protein localises to the microtubule organizing center. It is found in the centrosome. Functionally, plays a role in the organization of both preexisting and nascent microtubules in interphase cells. During mitosis, required for the organization and orientation of the mitotic spindle. The protein is Centrosomal protein of 70 kDa (Cep70) of Rattus norvegicus (Rat).